Reading from the N-terminus, the 284-residue chain is 4-hydroxybenzoate octaprenyltransferase (284 aa).

8 helical membrane passes run 14–34 (VHQP…LWIT), 41–61 (FIVL…GCVI), 93–113 (WVFF…NNII), 134–154 (YIYL…LIVY), 166–186 (WLLF…YAMV), 209–229 (IVIG…GIVE), 233–253 (IIFY…QQVL), and 262–282 (CLWA…GIVL).

This sequence belongs to the UbiA prenyltransferase family. Mg(2+) is required as a cofactor.

Its subcellular location is the cell inner membrane. It catalyses the reaction all-trans-octaprenyl diphosphate + 4-hydroxybenzoate = 4-hydroxy-3-(all-trans-octaprenyl)benzoate + diphosphate. It functions in the pathway cofactor biosynthesis; ubiquinone biosynthesis. In terms of biological role, catalyzes the prenylation of para-hydroxybenzoate (PHB) with an all-trans polyprenyl group. Mediates the second step in the final reaction sequence of ubiquinone-8 (UQ-8) biosynthesis, which is the condensation of the polyisoprenoid side chain with PHB, generating the first membrane-bound Q intermediate 3-octaprenyl-4-hydroxybenzoate. The protein is 4-hydroxybenzoate octaprenyltransferase of Blochmanniella floridana.